Reading from the N-terminus, the 241-residue chain is MSGGSARSLGKGSAPPGPVPEGLIRVYSMRFCPFAQRTLLVLNAKGIRHQVININLKNKPEWFFQKNPSGLVPVLENSQGQLIYESAITCEYLDEAYPGKKLLPDDPYEKACQKMVFELSSKVPPLLIRFIRRENEADCSGLKEELRKEFSKLEEVLTKKKTTYFGGSSLSMIDYLIWPWFERLEALELNECIDHTPKLKLWMAAMMKDPAVSALHIEPRDLRAFNDLYLQNSPEACDYGL.

S2 is modified (N-acetylserine). The GST N-terminal domain occupies G22–K101. The active-site Nucleophile is the C32. K57 carries the post-translational modification N6-acetyllysine. Glutathione is bound by residues K59, V72, and E85 to S86. In terms of domain architecture, GST C-terminal spans D106 to F225. 3 positions are modified to N6-acetyllysine: K143, K148, and K152.

As to quaternary structure, homodimer. Most abundant in the liver and skeletal muscle; also expressed in heart, diaphragm, colon, thymus, kidney, lung, ovaries, spleen, intestine and pancreas.

It localises to the cytoplasm. It is found in the cytosol. It catalyses the reaction RX + glutathione = an S-substituted glutathione + a halide anion + H(+). It carries out the reaction L-dehydroascorbate + 2 glutathione = glutathione disulfide + L-ascorbate. The enzyme catalyses methylarsonate + 2 glutathione + H(+) = methylarsonous acid + glutathione disulfide + H2O. Exhibits glutathione-dependent thiol transferase and dehydroascorbate reductase activities. Has S-(phenacyl)glutathione reductase activity. Also has glutathione S-transferase activity. Participates in the biotransformation of inorganic arsenic and reduces monomethylarsonic acid (MMA) and dimethylarsonic acid. The chain is Glutathione S-transferase omega-1 (GSTO1) from Sus scrofa (Pig).